Here is a 669-residue protein sequence, read N- to C-terminus: Pre-mRNA-processing factor 39 (669 aa).

A compositionally biased stretch (basic and acidic residues) spans 1-10 (MQNSHMDEYR). The disordered stretch occupies residues 1–23 (MQNSHMDEYRNSSNGSTGNSSEV). A compositionally biased stretch (low complexity) spans 11–23 (NSSNGSTGNSSEV). Residue serine 44 is modified to Phosphoserine. HAT repeat units lie at residues 109-141 (NHLM…LEKR), 143-175 (DNIK…FLKE), 183-218 (ETNN…WENE), 220-253 (GNLR…HVQN), 333-365 (TFEE…FEIE), 367-399 (GTHE…YMEN), and 404-436 (GVRH…QQGN). The span at 599-624 (KEQDSLKRKAENGSEEPEEKKAHTED) shows a compositional bias: basic and acidic residues. Residues 599–634 (KEQDSLKRKAENGSEEPEEKKAHTEDTTSSSTQMID) are disordered. Polar residues predominate over residues 625-634 (TTSSSTQMID).

The protein belongs to the PRP39 family.

It is found in the nucleus. Functionally, involved in pre-mRNA splicing. The sequence is that of Pre-mRNA-processing factor 39 (PRPF39) from Homo sapiens (Human).